A 196-amino-acid polypeptide reads, in one-letter code: Small heat shock protein C3 (196 aa).

The sHSP domain occupies 88–196 (SAYSSSAIRT…EKDAKEIPIQ (109 aa)).

The protein belongs to the small heat shock protein (HSP20) family.

The chain is Small heat shock protein C3 (hspc3-1) from Rickettsia felis (strain ATCC VR-1525 / URRWXCal2) (Rickettsia azadi).